The chain runs to 200 residues: Pyridoxal 5'-phosphate synthase subunit PdxT (200 aa).

52 to 54 (GES) serves as a coordination point for L-glutamine. Cysteine 84 functions as the Nucleophile in the catalytic mechanism. L-glutamine-binding positions include arginine 116 and 145 to 146 (IR). Residues histidine 181 and glutamate 183 each act as charge relay system in the active site.

It belongs to the glutaminase PdxT/SNO family. As to quaternary structure, in the presence of PdxS, forms a dodecamer of heterodimers. Only shows activity in the heterodimer.

The enzyme catalyses aldehydo-D-ribose 5-phosphate + D-glyceraldehyde 3-phosphate + L-glutamine = pyridoxal 5'-phosphate + L-glutamate + phosphate + 3 H2O + H(+). The catalysed reaction is L-glutamine + H2O = L-glutamate + NH4(+). It functions in the pathway cofactor biosynthesis; pyridoxal 5'-phosphate biosynthesis. Catalyzes the hydrolysis of glutamine to glutamate and ammonia as part of the biosynthesis of pyridoxal 5'-phosphate. The resulting ammonia molecule is channeled to the active site of PdxS. The protein is Pyridoxal 5'-phosphate synthase subunit PdxT of Saccharolobus islandicus (strain Y.G.57.14 / Yellowstone #1) (Sulfolobus islandicus).